Reading from the N-terminus, the 422-residue chain is Probable protein phosphatase 2C 69 (422 aa).

Positions 45 to 294 (TLLLAEAGER…DDTTCIVVDI (250 aa)) constitute a PPM-type phosphatase domain. Residues Asp-70, Gly-71, Asp-246, and Asp-285 each contribute to the Mn(2+) site.

The protein belongs to the PP2C family. Mg(2+) is required as a cofactor. The cofactor is Mn(2+).

The catalysed reaction is O-phospho-L-seryl-[protein] + H2O = L-seryl-[protein] + phosphate. It catalyses the reaction O-phospho-L-threonyl-[protein] + H2O = L-threonyl-[protein] + phosphate. The polypeptide is Probable protein phosphatase 2C 69 (Oryza sativa subsp. japonica (Rice)).